A 332-amino-acid chain; its full sequence is MQSTESFHALPTRSDVEDPNERRKIQNRIAQKKHRQKMKRRIEELETKVNNQCQTSNWTSHAPTDSCQEQQFLDNTDFGLMLEDDLLYRELSASLDGAGLTAVAQMHDSPRPNQQQRLSVSGMPSSPTSTSNVAQRGLSIGDHSSASNHLSSLSLVPGSTEGSLPTRQHDNLCNQDLRDMVPEEKMSRILKVIQDAGYKDMDSFMTEYYVRDFDASSHVSAVQRQSRSRRLRGFLEQLRVGAESWSDYEAHDYQQEISKSAEAIYAKELDVFSTTTLGENASFQGLASLYRVLQSTVGSDIENHLRHEQSMMQRQVSEIVHRQVYTFNPAQC.

Positions 1–37 are disordered; that stretch reads MQSTESFHALPTRSDVEDPNERRKIQNRIAQKKHRQK. The span at 14–24 shows a compositional bias: basic and acidic residues; that stretch reads SDVEDPNERRK. Residues 17 to 50 form the bZIP domain; that stretch reads EDPNERRKIQNRIAQKKHRQKMKRRIEELETKVN. The basic motif stretch occupies residues 21 to 43; sequence ERRKIQNRIAQKKHRQKMKRRIE. The segment at 45–52 is leucine-zipper; sequence LETKVNNQ. The disordered stretch occupies residues 106–170; that stretch reads MHDSPRPNQQ…EGSLPTRQHD (65 aa). Polar residues predominate over residues 111–134; the sequence is RPNQQQRLSVSGMPSSPTSTSNVA. The segment covering 143-155 has biased composition (low complexity); sequence HSSASNHLSSLSL. Residues 160 to 170 are compositionally biased toward polar residues; sequence TEGSLPTRQHD.

It belongs to the bZIP family.

Its subcellular location is the nucleus. In terms of biological role, transcription factor that specifically controls transcription of the zearalenone biosynthesis cluster genes. The protein is Transcription factor ZEB2 of Gibberella zeae (strain ATCC MYA-4620 / CBS 123657 / FGSC 9075 / NRRL 31084 / PH-1) (Wheat head blight fungus).